The sequence spans 127 residues: Holo-[acyl-carrier-protein] synthase (127 aa).

Mg(2+)-binding residues include Asp-9 and Glu-58.

This sequence belongs to the P-Pant transferase superfamily. AcpS family. The cofactor is Mg(2+).

Its subcellular location is the cytoplasm. The enzyme catalyses apo-[ACP] + CoA = holo-[ACP] + adenosine 3',5'-bisphosphate + H(+). Its function is as follows. Transfers the 4'-phosphopantetheine moiety from coenzyme A to a Ser of acyl-carrier-protein. In Shewanella oneidensis (strain ATCC 700550 / JCM 31522 / CIP 106686 / LMG 19005 / NCIMB 14063 / MR-1), this protein is Holo-[acyl-carrier-protein] synthase.